Reading from the N-terminus, the 290-residue chain is Feruloyl esterase D (290 aa).

The first 25 residues, 1-25 (MAGLHSRLTTFLLLLLSALPAIAAA), serve as a signal peptide directing secretion. Residues 260–280 (HGGDHNPSQRDPGQNDPFAPR) are disordered.

The protein belongs to the serine esterase family.

The protein localises to the secreted. It catalyses the reaction feruloyl-polysaccharide + H2O = ferulate + polysaccharide.. In terms of biological role, involved in degradation of plant cell walls. Hydrolyzes the feruloyl-arabinose ester bond in arabinoxylans as well as the feruloyl-galactose and feruloyl-arabinose ester bonds in pectin. Active against methyl esters of ferulate (MFA), sinapate (MSA), caffeate (MCA) and p-coumarate (MpCA). This chain is Feruloyl esterase D, found in Neurospora crassa (strain ATCC 24698 / 74-OR23-1A / CBS 708.71 / DSM 1257 / FGSC 987).